A 265-amino-acid polypeptide reads, in one-letter code: Phosphonates import ATP-binding protein PhnC (265 aa).

Positions 3–247 constitute an ABC transporter domain; the sequence is LRLKQAFLHH…MLDTLYANEQ (245 aa). ATP is bound at residue 36-43; it reads GPSGAGKS.

Belongs to the ABC transporter superfamily. Phosphonates importer (TC 3.A.1.9.1) family. In terms of assembly, the complex is composed of two ATP-binding proteins (PhnC), two transmembrane proteins (PhnE) and a solute-binding protein (PhnD).

It is found in the cell inner membrane. The enzyme catalyses phosphonate(out) + ATP + H2O = phosphonate(in) + ADP + phosphate + H(+). In terms of biological role, part of the ABC transporter complex PhnCDE involved in phosphonates import. Responsible for energy coupling to the transport system. This chain is Phosphonates import ATP-binding protein PhnC, found in Pseudomonas fluorescens (strain Pf0-1).